Here is a 144-residue protein sequence, read N- to C-terminus: Maximins 3/H9 type 2 (144 aa).

The signal sequence occupies residues 1 to 18 (MNFKYIVAVSFLIASAYA). Propeptides lie at residues 19 to 43 (RSVQNDEQSLSQRDVLEEESLREIR) and 74 to 123 (TAEE…KEKR). The residue at position 143 (Ile143) is an Isoleucine amide.

It belongs to the bombinin family. Expressed by the skin glands.

It is found in the secreted. Maximin-3 shows antibacterial activity against both Gram-positive and Gram-negative bacteria. It also shows antimicrobial activity against the fungus C.albicans, but not against A.flavus nor P.uticale. It has little hemolytic activity. It possess a significant cytotoxicity against tumor cell lines. It possess a significant anti-HIV activity. It shows high spermicidal activity. In terms of biological role, maximin-H9 shows antimicrobial activity against bacteria and against the fungus C.albicans. Shows strong hemolytic activity. The chain is Maximins 3/H9 type 2 from Bombina maxima (Giant fire-bellied toad).